A 179-amino-acid polypeptide reads, in one-letter code: ATP-dependent protease subunit HslV (179 aa).

Thr-9 is an active-site residue. 3 residues coordinate Na(+): Ala-164, Cys-167, and Thr-170.

Belongs to the peptidase T1B family. HslV subfamily. In terms of assembly, a double ring-shaped homohexamer of HslV is capped on each side by a ring-shaped HslU homohexamer. The assembly of the HslU/HslV complex is dependent on binding of ATP.

It localises to the cytoplasm. The enzyme catalyses ATP-dependent cleavage of peptide bonds with broad specificity.. Allosterically activated by HslU binding. Protease subunit of a proteasome-like degradation complex believed to be a general protein degrading machinery. The polypeptide is ATP-dependent protease subunit HslV (Syntrophobacter fumaroxidans (strain DSM 10017 / MPOB)).